Reading from the N-terminus, the 444-residue chain is ATP-dependent protease ATPase subunit HslU (444 aa).

ATP is bound by residues Ile-20 and 62-67 (GVGKTE). The tract at residues 130–158 (EDRILDALVPPPRGASGEPERGEDNSARQ) is disordered. 3 residues coordinate ATP: Asp-257, Glu-322, and Arg-394.

This sequence belongs to the ClpX chaperone family. HslU subfamily. As to quaternary structure, a double ring-shaped homohexamer of HslV is capped on each side by a ring-shaped HslU homohexamer. The assembly of the HslU/HslV complex is dependent on binding of ATP.

The protein localises to the cytoplasm. In terms of biological role, ATPase subunit of a proteasome-like degradation complex; this subunit has chaperone activity. The binding of ATP and its subsequent hydrolysis by HslU are essential for unfolding of protein substrates subsequently hydrolyzed by HslV. HslU recognizes the N-terminal part of its protein substrates and unfolds these before they are guided to HslV for hydrolysis. This Bordetella bronchiseptica (strain ATCC BAA-588 / NCTC 13252 / RB50) (Alcaligenes bronchisepticus) protein is ATP-dependent protease ATPase subunit HslU.